A 426-amino-acid chain; its full sequence is D-tagatose-1,6-bisphosphate aldolase subunit KbaZ (426 aa).

It belongs to the GatZ/KbaZ family. KbaZ subfamily. Forms a complex with KbaY.

Its pathway is carbohydrate metabolism; D-tagatose 6-phosphate degradation; D-glyceraldehyde 3-phosphate and glycerone phosphate from D-tagatose 6-phosphate: step 2/2. Component of the tagatose-1,6-bisphosphate aldolase KbaYZ that is required for full activity and stability of the Y subunit. Could have a chaperone-like function for the proper and stable folding of KbaY. When expressed alone, KbaZ does not show any aldolase activity. This is D-tagatose-1,6-bisphosphate aldolase subunit KbaZ from Shigella flexneri.